The primary structure comprises 917 residues: Translation initiation factor IF-2 (917 aa).

The span at 102–249 (EKSQAEEQAL…KWTAEPKAPE (148 aa)) shows a compositional bias: basic and acidic residues. The segment at 102 to 326 (EKSQAEEQAL…KSSTLQQGFH (225 aa)) is disordered. A compositionally biased stretch (basic residues) spans 279–293 (RRGRTAKAPRAKKNN). A compositionally biased stretch (basic and acidic residues) spans 294–306 (RHSEKADREEARA). The tr-type G domain occupies 416–585 (SRAPVVTIMG…LLQAEVLELK (170 aa)). Residues 425 to 432 (GHVDHGKT) form a G1 region. 425–432 (GHVDHGKT) serves as a coordination point for GTP. Residues 450-454 (GITQH) form a G2 region. The interval 471-474 (DTPG) is G3. Residues 471–475 (DTPGH) and 525–528 (NKID) each bind GTP. The G4 stretch occupies residues 525 to 528 (NKID). The segment at 561 to 563 (SAK) is G5.

It belongs to the TRAFAC class translation factor GTPase superfamily. Classic translation factor GTPase family. IF-2 subfamily.

It is found in the cytoplasm. In terms of biological role, one of the essential components for the initiation of protein synthesis. Protects formylmethionyl-tRNA from spontaneous hydrolysis and promotes its binding to the 30S ribosomal subunits. Also involved in the hydrolysis of GTP during the formation of the 70S ribosomal complex. The chain is Translation initiation factor IF-2 (infB) from Proteus vulgaris.